A 304-amino-acid chain; its full sequence is Protein translocase subunit SecF (304 aa).

The next 6 helical transmembrane spans lie at 20–40 (AKLFFIISGVLIVISLFLIFT), 143–163 (AMMALLYANIGVLIYVAIRFE), 164–184 (LIFAIGAILALVHDVIITLGF), 195–215 (TVVAALLALIGYSLNDTIVVF), 244–266 (LSRTIITSLLTFFTVLSLMIFGG), and 276–298 (LVIGIIVGTYSSIGIASGLVYLI).

Belongs to the SecD/SecF family. SecF subfamily. As to quaternary structure, forms a complex with SecD. Part of the essential Sec protein translocation apparatus which comprises SecA, SecYEG and auxiliary proteins SecDF. Other proteins may also be involved.

It is found in the cell inner membrane. Its function is as follows. Part of the Sec protein translocase complex. Interacts with the SecYEG preprotein conducting channel. SecDF uses the proton motive force (PMF) to complete protein translocation after the ATP-dependent function of SecA. The chain is Protein translocase subunit SecF from Calditerrivibrio nitroreducens (strain DSM 19672 / NBRC 101217 / Yu37-1).